Consider the following 40-residue polypeptide: Photosystem II reaction center protein J (40 aa).

The helical transmembrane segment at 8–28 threads the bilayer; that stretch reads IPLWLIGTVAGILIIGLLGVF.

It belongs to the PsbJ family. As to quaternary structure, PSII is composed of 1 copy each of membrane proteins PsbA, PsbB, PsbC, PsbD, PsbE, PsbF, PsbH, PsbI, PsbJ, PsbK, PsbL, PsbM, PsbT, PsbX, PsbY, PsbZ, Psb30/Ycf12, at least 3 peripheral proteins of the oxygen-evolving complex and a large number of cofactors. It forms dimeric complexes.

The protein localises to the plastid. It is found in the chloroplast thylakoid membrane. In terms of biological role, one of the components of the core complex of photosystem II (PSII). PSII is a light-driven water:plastoquinone oxidoreductase that uses light energy to abstract electrons from H(2)O, generating O(2) and a proton gradient subsequently used for ATP formation. It consists of a core antenna complex that captures photons, and an electron transfer chain that converts photonic excitation into a charge separation. The protein is Photosystem II reaction center protein J of Nandina domestica (Heavenly bamboo).